Here is a 211-residue protein sequence, read N- to C-terminus: Thiamine-phosphate synthase (211 aa).

4-amino-2-methyl-5-(diphosphooxymethyl)pyrimidine-binding positions include 37–41 (QLRIK) and Asn-69. Asp-70 and Asp-89 together coordinate Mg(2+). Ser-108 is a binding site for 4-amino-2-methyl-5-(diphosphooxymethyl)pyrimidine. 134–136 (TQT) provides a ligand contact to 2-[(2R,5Z)-2-carboxy-4-methylthiazol-5(2H)-ylidene]ethyl phosphate. Residue Lys-137 participates in 4-amino-2-methyl-5-(diphosphooxymethyl)pyrimidine binding. 2-[(2R,5Z)-2-carboxy-4-methylthiazol-5(2H)-ylidene]ethyl phosphate is bound by residues Gly-166 and 186–187 (VS).

Belongs to the thiamine-phosphate synthase family. Requires Mg(2+) as cofactor.

It carries out the reaction 2-[(2R,5Z)-2-carboxy-4-methylthiazol-5(2H)-ylidene]ethyl phosphate + 4-amino-2-methyl-5-(diphosphooxymethyl)pyrimidine + 2 H(+) = thiamine phosphate + CO2 + diphosphate. The enzyme catalyses 2-(2-carboxy-4-methylthiazol-5-yl)ethyl phosphate + 4-amino-2-methyl-5-(diphosphooxymethyl)pyrimidine + 2 H(+) = thiamine phosphate + CO2 + diphosphate. It catalyses the reaction 4-methyl-5-(2-phosphooxyethyl)-thiazole + 4-amino-2-methyl-5-(diphosphooxymethyl)pyrimidine + H(+) = thiamine phosphate + diphosphate. The protein operates within cofactor biosynthesis; thiamine diphosphate biosynthesis; thiamine phosphate from 4-amino-2-methyl-5-diphosphomethylpyrimidine and 4-methyl-5-(2-phosphoethyl)-thiazole: step 1/1. Its function is as follows. Condenses 4-methyl-5-(beta-hydroxyethyl)thiazole monophosphate (THZ-P) and 2-methyl-4-amino-5-hydroxymethyl pyrimidine pyrophosphate (HMP-PP) to form thiamine monophosphate (TMP). The protein is Thiamine-phosphate synthase of Escherichia coli O9:H4 (strain HS).